The primary structure comprises 297 residues: Peroxisome assembly protein 12 (297 aa).

Residues methionine 1 to serine 16 lie on the Peroxisomal matrix side of the membrane. A helical membrane pass occupies residues isoleucine 17 to arginine 44. The Cytoplasmic portion of the chain corresponds to leucine 45–lysine 48. Residues leucine 49–arginine 73 form a helical membrane-spanning segment. Topologically, residues lysine 74–asparagine 98 are peroxisomal matrix. The helical transmembrane segment at arginine 99–leucine 119 threads the bilayer. At arginine 120–threonine 124 the chain is on the cytoplasmic side. Residues arginine 125–tyrosine 158 traverse the membrane as a helical segment. The Peroxisomal matrix portion of the chain corresponds to alanine 159–lysine 191. Residues methionine 192–leucine 219 traverse the membrane as a helical segment. Residues isoleucine 220–threonine 297 lie on the Cytoplasmic side of the membrane. Cysteine 244, cysteine 247, cysteine 265, and cysteine 268 together coordinate Zn(2+). The segment at cysteine 244–histidine 283 adopts an RING-type; degenerate zinc-finger fold.

The protein belongs to the pex2/pex10/pex12 family. As to quaternary structure, component of the PEX2-PEX10-PEX12 retrotranslocation channel.

It is found in the peroxisome membrane. It participates in protein modification; protein ubiquitination. Component of a retrotranslocation channel required for peroxisome organization by mediating export of the PEX5 receptor from peroxisomes to the cytosol, thereby promoting PEX5 recycling. The retrotranslocation channel is composed of PEX2, PEX10 and PEX12; each subunit contributing transmembrane segments that coassemble into an open channel that specifically allows the passage of PEX5 through the peroxisomal membrane. PEX12 also regulates PEX5 recycling by activating the E3 ubiquitin-protein ligase activity of PEX10. When PEX5 recycling is compromised, PEX12 stimulates PEX10-mediated polyubiquitination of PEX5, leading to its subsequent degradation. This Drosophila melanogaster (Fruit fly) protein is Peroxisome assembly protein 12 (Pex12).